Here is a 221-residue protein sequence, read N- to C-terminus: Probable septum site-determining protein MinC (221 aa).

The protein belongs to the MinC family. As to quaternary structure, interacts with MinD and FtsZ.

In terms of biological role, cell division inhibitor that blocks the formation of polar Z ring septums. Rapidly oscillates between the poles of the cell to destabilize FtsZ filaments that have formed before they mature into polar Z rings. Prevents FtsZ polymerization. This Shewanella denitrificans (strain OS217 / ATCC BAA-1090 / DSM 15013) protein is Probable septum site-determining protein MinC.